A 625-amino-acid polypeptide reads, in one-letter code: DNA-directed RNA polymerase subunit gamma (625 aa).

Zn(2+) contacts are provided by Cys71, Cys73, Cys86, and Cys89. Residues Asp467, Asp469, and Asp471 each coordinate Mg(2+).

The protein belongs to the RNA polymerase beta' chain family. RpoC1 subfamily. In terms of assembly, in cyanobacteria the RNAP catalytic core is composed of 2 alpha, 1 beta, 1 beta', 1 gamma and 1 omega subunit. When a sigma factor is associated with the core the holoenzyme is formed, which can initiate transcription. Mg(2+) serves as cofactor. Requires Zn(2+) as cofactor.

It carries out the reaction RNA(n) + a ribonucleoside 5'-triphosphate = RNA(n+1) + diphosphate. Functionally, DNA-dependent RNA polymerase catalyzes the transcription of DNA into RNA using the four ribonucleoside triphosphates as substrates. In Trichormus variabilis (strain ATCC 29413 / PCC 7937) (Anabaena variabilis), this protein is DNA-directed RNA polymerase subunit gamma.